The sequence spans 59 residues: MPFLVGLSPPFLYFELIGHFQVEPSPTPTIKGRKWWRLSLFLIFWGERRVKKETKANDC.

A helical membrane pass occupies residues 7-23; it reads LSPPFLYFELIGHFQVE.

Belongs to the ATPase protein 8 family. In terms of assembly, F-type ATPases have 2 components, CF(1) - the catalytic core - and CF(0) - the membrane proton channel.

It is found in the mitochondrion membrane. Functionally, mitochondrial membrane ATP synthase (F(1)F(0) ATP synthase or Complex V) produces ATP from ADP in the presence of a proton gradient across the membrane which is generated by electron transport complexes of the respiratory chain. F-type ATPases consist of two structural domains, F(1) - containing the extramembraneous catalytic core and F(0) - containing the membrane proton channel, linked together by a central stalk and a peripheral stalk. During catalysis, ATP synthesis in the catalytic domain of F(1) is coupled via a rotary mechanism of the central stalk subunits to proton translocation. Part of the complex F(0) domain. Minor subunit located with subunit a in the membrane. The chain is ATP synthase protein 8 (MT-ATP8) from Oenothera berteroana (Bertero's evening primrose).